The following is a 417-amino-acid chain: Sulfite reductase, dissimilatory-type subunit alpha (417 aa).

[4Fe-4S] cluster-binding residues include Cys170, Cys176, Cys214, Cys218, Cys264, Cys284, Cys287, and Cys290. Residue Cys218 participates in siroheme binding.

[4Fe-4S] cluster serves as cofactor. Requires siroheme as cofactor.

It carries out the reaction [DsrC protein]-trisulfide + NAD(+) + 3 H2O = [DsrC protein]-dithiol + sulfite + NADH + 3 H(+). In terms of biological role, catalyzes the reduction of sulfite to sulfide. This is the terminal oxidation reaction in sulfate respiration. This is Sulfite reductase, dissimilatory-type subunit alpha (dsrA) from Allochromatium vinosum (strain ATCC 17899 / DSM 180 / NBRC 103801 / NCIMB 10441 / D) (Chromatium vinosum).